A 790-amino-acid polypeptide reads, in one-letter code: Nitrogen permease reactivator protein (790 aa).

Positions 1-68 (MSSLTRLLQE…DRNRANVPVP (68 aa)) are disordered. Residues 16 to 38 (TSNSSPRTSADTLTTTPESQSLD) are compositionally biased toward polar residues. Over residues 46–58 (SSHIGSVSNSSSS) the composition is skewed to low complexity. The residue at position 47 (serine 47) is a Phosphoserine; by autocatalysis. Phosphoserine is present on residues serine 85, serine 90, serine 100, serine 111, serine 116, serine 125, serine 137, and serine 141. Residues 151–175 (RLSTTSHTSGRAIPSLSSSIPYSVP) are compositionally biased toward polar residues. Disordered stretches follow at residues 151–188 (RLST…NSNS) and 234–258 (LQKA…SGSF). Over residues 176–188 (NSNKDNNSSNSNS) the composition is skewed to low complexity. Residues 238 to 248 (SMDSNNANATQ) show a composition bias toward polar residues. Residues 249-258 (SRSISRSGSF) are compositionally biased toward low complexity. Serine 257 carries the post-translational modification Phosphoserine; by autocatalysis. Residues serine 259, serine 260, serine 288, serine 292, serine 317, serine 320, and serine 328 each carry the phosphoserine modification. The span at 276-289 (NSNSAGMSFSANSN) shows a compositional bias: low complexity. The disordered stretch occupies residues 276–357 (NSNSAGMSFS…QSVPRSQHSS (82 aa)). Polar residues-rich tracts occupy residues 290–305 (GPSP…NGST), 314–339 (RQSS…SPSS), and 346–357 (PSQSVPRSQHSS). Tyrosine 334 bears the Phosphotyrosine mark. 3 positions are modified to phosphoserine: serine 336, serine 353, and serine 356. A Phosphoserine; by autocatalysis modification is found at serine 357. The residue at position 385 (serine 385) is a Phosphoserine. Residues 438–742 (IKTGADLGAG…IEEIMEDPWI (305 aa)) form the Protein kinase domain. Residues 444 to 452 (LGAGAGGSV) and lysine 467 contribute to the ATP site. Aspartate 561 (proton acceptor) is an active-site residue. Disordered stretches follow at residues 666-704 (LVTR…NIGP) and 766-790 (HHTQ…QNNQ). A compositionally biased stretch (basic and acidic residues) spans 677-688 (DESHSTEKKKPE). Over residues 689 to 701 (SSSNNVSDPNNVN) the composition is skewed to low complexity.

Belongs to the protein kinase superfamily. Ser/Thr protein kinase family. Interacts with TIP41. In terms of processing, hyperphosphorylated in nitrogen-rich growth medium. Nitrogen limitation (or rapamycin treatment) leads to substantial, though not complete dephosphorylation. Autophosphorylation plays only a minor role and seems not to be regulated by the quality of the nitrogen source.

The protein resides in the cytoplasm. The enzyme catalyses L-seryl-[protein] + ATP = O-phospho-L-seryl-[protein] + ADP + H(+). It carries out the reaction L-threonyl-[protein] + ATP = O-phospho-L-threonyl-[protein] + ADP + H(+). With respect to regulation, dephosphorylation by SIT4 activates NPR1 kinase activity. Its function is as follows. Nutrient-regulated protein kinase that promotes the activity of at least 6 distinct transport systems for nitrogenous nutrients under conditions of nitrogen catabolite derepression. Under poor nitrogen growth conditions, required for post-Golgi sorting of the general amino acid permease GAP1 and the three known ammonia permeases, MEP1/2/3, to the plasma membrane. Also contributes to the stability and the retention of GAP1 at the plasma membrane. Inversely, promotes the degradation of tryptophan permease TAT2 under the same conditions. Activity is regulated by the TOR signaling pathway via phosphatase SIT4. Although thought to be involved in regulation of GLN3-dependent transcription by nitrogen catabolite repression, this seems to be an indirect effect from the reduced uptake of the nitrogen-repressing compound. This Saccharomyces cerevisiae (strain ATCC 204508 / S288c) (Baker's yeast) protein is Nitrogen permease reactivator protein (NPR1).